A 504-amino-acid chain; its full sequence is Probable cytosol aminopeptidase (504 aa).

Lys-268 and Asp-273 together coordinate Mn(2+). Lys-280 is an active-site residue. Residues Asp-291, Asp-350, and Glu-352 each contribute to the Mn(2+) site. The active site involves Arg-354.

Belongs to the peptidase M17 family. Requires Mn(2+) as cofactor.

The protein resides in the cytoplasm. The enzyme catalyses Release of an N-terminal amino acid, Xaa-|-Yaa-, in which Xaa is preferably Leu, but may be other amino acids including Pro although not Arg or Lys, and Yaa may be Pro. Amino acid amides and methyl esters are also readily hydrolyzed, but rates on arylamides are exceedingly low.. It catalyses the reaction Release of an N-terminal amino acid, preferentially leucine, but not glutamic or aspartic acids.. Functionally, presumably involved in the processing and regular turnover of intracellular proteins. Catalyzes the removal of unsubstituted N-terminal amino acids from various peptides. This chain is Probable cytosol aminopeptidase, found in Psychromonas ingrahamii (strain DSM 17664 / CCUG 51855 / 37).